Here is a 245-residue protein sequence, read N- to C-terminus: 1-(5-phosphoribosyl)-5-[(5-phosphoribosylamino)methylideneamino] imidazole-4-carboxamide isomerase (245 aa).

Catalysis depends on aspartate 8, which acts as the Proton acceptor. Aspartate 129 functions as the Proton donor in the catalytic mechanism.

This sequence belongs to the HisA/HisF family.

The protein resides in the cytoplasm. It carries out the reaction 1-(5-phospho-beta-D-ribosyl)-5-[(5-phospho-beta-D-ribosylamino)methylideneamino]imidazole-4-carboxamide = 5-[(5-phospho-1-deoxy-D-ribulos-1-ylimino)methylamino]-1-(5-phospho-beta-D-ribosyl)imidazole-4-carboxamide. It functions in the pathway amino-acid biosynthesis; L-histidine biosynthesis; L-histidine from 5-phospho-alpha-D-ribose 1-diphosphate: step 4/9. This is 1-(5-phosphoribosyl)-5-[(5-phosphoribosylamino)methylideneamino] imidazole-4-carboxamide isomerase from Heliobacterium modesticaldum (strain ATCC 51547 / Ice1).